We begin with the raw amino-acid sequence, 206 residues long: Na(+)-translocating NADH-quinone reductase subunit E (206 aa).

The next 6 membrane-spanning stretches (helical) occupy residues alanine 12–valine 32, isoleucine 36–valine 56, phenylalanine 85–phenylalanine 105, glycine 118–valine 138, valine 148–isoleucine 168, and leucine 184–isoleucine 204.

Belongs to the NqrDE/RnfAE family. As to quaternary structure, composed of six subunits; NqrA, NqrB, NqrC, NqrD, NqrE and NqrF.

It localises to the cell inner membrane. It carries out the reaction a ubiquinone + n Na(+)(in) + NADH + H(+) = a ubiquinol + n Na(+)(out) + NAD(+). NQR complex catalyzes the reduction of ubiquinone-1 to ubiquinol by two successive reactions, coupled with the transport of Na(+) ions from the cytoplasm to the periplasm. NqrA to NqrE are probably involved in the second step, the conversion of ubisemiquinone to ubiquinol. The sequence is that of Na(+)-translocating NADH-quinone reductase subunit E from Chromohalobacter salexigens (strain ATCC BAA-138 / DSM 3043 / CIP 106854 / NCIMB 13768 / 1H11).